Reading from the N-terminus, the 484-residue chain is Glycogen synthase (484 aa).

Lysine 15 serves as a coordination point for ADP-alpha-D-glucose.

It belongs to the glycosyltransferase 1 family. Bacterial/plant glycogen synthase subfamily.

It catalyses the reaction [(1-&gt;4)-alpha-D-glucosyl](n) + ADP-alpha-D-glucose = [(1-&gt;4)-alpha-D-glucosyl](n+1) + ADP + H(+). It participates in glycan biosynthesis; glycogen biosynthesis. In terms of biological role, synthesizes alpha-1,4-glucan chains using ADP-glucose. The sequence is that of Glycogen synthase from Geotalea uraniireducens (strain Rf4) (Geobacter uraniireducens).